Here is a 210-residue protein sequence, read N- to C-terminus: MRRGARGSTNLGGMTWQEVLEFNANSTPTKLYPDRDIPLQRSIRPEELLELRFYKEIRTSFLDESAFYIRRNPISVVQRNEDGLVRYSDRNKPKRKNDNLSLSDLDLDPKFFPEELRKTLGAASATGRKRARRKLDMKTFIDFTIKAQDLKDESSEAAHPNIEEEPDEGLEEEDEDFGDDDDNDYGENYFDNGEGDDYDDYDGDEGAIYE.

Residue S103 is modified to Phosphoserine. The disordered stretch occupies residues 151–210 (KDESSEAAHPNIEEEPDEGLEEEDEDFGDDDDNDYGENYFDNGEGDDYDDYDGDEGAIYE). Acidic residues-rich tracts occupy residues 163–185 (EEEP…DNDY) and 193–210 (GEGD…AIYE).

It belongs to the eukaryotic RPC7 RNA polymerase subunit family. In terms of assembly, component of the RNA polymerase III (Pol III) complex.

It is found in the cytoplasm. It localises to the nucleus. Functionally, DNA-dependent RNA polymerase catalyzes the transcription of DNA into RNA using the four ribonucleoside triphosphates as substrates. Specific peripheric component of RNA polymerase III which synthesizes small RNAs, such as 5S rRNA and tRNAs. This is DNA-directed RNA polymerase III subunit rpc31 (rpc31) from Schizosaccharomyces pombe (strain 972 / ATCC 24843) (Fission yeast).